The primary structure comprises 499 residues: Aspartyl/glutamyl-tRNA(Asn/Gln) amidotransferase subunit B (499 aa).

This sequence belongs to the GatB/GatE family. GatB subfamily. Heterotrimer of A, B and C subunits.

The enzyme catalyses L-glutamyl-tRNA(Gln) + L-glutamine + ATP + H2O = L-glutaminyl-tRNA(Gln) + L-glutamate + ADP + phosphate + H(+). It catalyses the reaction L-aspartyl-tRNA(Asn) + L-glutamine + ATP + H2O = L-asparaginyl-tRNA(Asn) + L-glutamate + ADP + phosphate + 2 H(+). In terms of biological role, allows the formation of correctly charged Asn-tRNA(Asn) or Gln-tRNA(Gln) through the transamidation of misacylated Asp-tRNA(Asn) or Glu-tRNA(Gln) in organisms which lack either or both of asparaginyl-tRNA or glutaminyl-tRNA synthetases. The reaction takes place in the presence of glutamine and ATP through an activated phospho-Asp-tRNA(Asn) or phospho-Glu-tRNA(Gln). The sequence is that of Aspartyl/glutamyl-tRNA(Asn/Gln) amidotransferase subunit B from Salinispora tropica (strain ATCC BAA-916 / DSM 44818 / JCM 13857 / NBRC 105044 / CNB-440).